The following is a 1597-amino-acid chain: MDVTKKNKRDGSEVTERIITETVSTRLTSLPPKGGTSNGYAKTGSLSGGSRLEKHSLTHGSSGYINSSGSTRGNASTSSYRRAHSPASTLPNSPGSTFERKIHITRHGTYEGSSSGNSSPEYPRKEFASSSTRGRSQTRESEIRVRLQSASPSTRWTELDDVKRLLKGSRSASVSPTRNSSNTLPIPKKGTVETKMVTASSQSVSGTYDATILDANLPSHMWSSTLPAGSSMGTYHNNVTTQSSSLLNTNAYSAGSVFGVPNNMTSGSSTLHPGVSTCSSVFGMQNNLAPSSSTLSHSTATASTAYGMKKNLPQSPAVVSTGVSTSAACTTNVQNEDLLHKDCKFLILEKDNTPAKKEMELLIMTKDSGKVFTASPASIAATSFSDDTLKKEKQAAYTADTCLVSDANGDVKTVSTKGKAASAEMHNYNHRGGGSGGGGGGGGGGGGGPWGAAPAWCPCGSCCSWWKWLLGLLLTWLLLLGLLFGLIALAEEVRALKARVAELEQSRSNVLLFKEEMQRANKDWLQGEAPSVEAGGKLGLDGHQQEELWLFVRNRLMAEQENGNLRGSPGPKGDMGSQGPKGDRGLPGTPGIPGVLGHPGPQGPKGQKGSVGEPGMEGPMGQRGREGPMGPRGEPGPPGFGEKGDRGAAGEPGVQGPPGVPGSVGPKGSGGSPGPRGPPGPMGPQGLRGEVGLPGIKGDKGPLGSPGPKGDQGEKGPRGLTGEPGLRGLPGAVGEPGAKGAVGPAGPDGHQGPRGEQGLTGMPGTRGPPGPSGDPGKPGFTGPQGPQGLPGTPGRPGAKGEPGAPGRIMTSEGSSTITVPGPPGPPGAMGPPGPPGAPGPRGERGLAGESFMGSSSSISELLSTRSFKEPMQTCHRASFLEARVAKTTPALSGRHCVLDTCRKGVDLRGPPGPPGPPGPPDLPFRVRQDPEAPQVKAELPGKRYESIGTQSLGLALGKSLPATSPQHRVLETYFSGPPGPPGPPGPKGDQGSSSLGLNLQGPPGPRGPKGDKGGSSSSTMFMPGPPGPPGPPGPPGSISSSGREIQQYISEYLQSDSIRSYLSGVQGPPGPPGPPGPVTTIAGETFDYSELASRVSSYLQTSGYSIGSSVSISTEDIVAALQREYLRRAGGWEPWGLGLPLPELLRASEEALVLVPSGQGRPGCGRAVAREPCGLGGPTPALPVLAGDDVRQYLRQYVIGDWSLQSLDYAELSSRILSYMSSSGISIGLPGPPGPPGLPGTSYEELLSLLQGSEYRGIIGPPGPPGPPGIPGNAWSSISVEDLSSYLHTAGVSSIPGPPGPPGPPGPRGPPGVSGALATYAAENSDSFRSELISYLTSPDVRSFIVGPPGPPGPQGPPGDSRLVSMDGSYSRDSRSSSHSASVSRGSSYSSSMGIGGASGGSLGEAGAFGLDMGLGRGYGGAAEGGMYGGEGGPLGAGFAGGLDYNELAVRVSESLQRQGLLQGMAYTVQGPPGQPGPQGPPGISKVFSAYSNVTEDLMDFFRSKSTSVIVFLTPCCPVRGALQDHQVGLGHPALEGTREKKETKVTKSMRGGEREASPSSHELPLEEQPLASVLAMAYGVHVKISPKGGSWRLTSY.

Disordered stretches follow at residues 1–155 and 168–188; these read MDVT…PSTR and GSRS…PIPK. Residues 1 to 468 lie on the Cytoplasmic side of the membrane; sequence MDVTKKNKRD…CGSCCSWWKW (468 aa). Positions 1–567 are nonhelical region (NC16A); the sequence is MDVTKKNKRD…AEQENGNLRG (567 aa). A compositionally biased stretch (basic and acidic residues) spans 9–19; it reads RDGSEVTERII. Composition is skewed to polar residues over residues 58–96, 111–120, and 170–184; these read THGS…SPGS, EGSSSGNSSP, and RSAS…SNTL. Residues 146 to 231 are necessary for interaction with DST and for the recruitment of DST to hemidesmosome; it reads RLQSASPSTR…WSSTLPAGSS (86 aa). A helical; Signal-anchor for type II membrane protein membrane pass occupies residues 469-489; sequence LLGLLLTWLLLLGLLFGLIAL. Topologically, residues 490 to 1597 are extracellular; that stretch reads AEEVRALKAR…KGGSWRLTSY (1108 aa). 5 disordered regions span residues 562 to 857, 907 to 927, 970 to 1041, 1289 to 1316, and 1344 to 1394; these read NGNL…SSSS, LRGP…FRVR, LETY…ISSS, TAGV…VSGA, and FIVG…SSMG. The tract at residues 568-1572 is triple-helical region; it reads SPGPKGDMGS…ELPLEEQPLA (1005 aa). A compositionally biased stretch (low complexity) spans 604 to 632; the sequence is PKGQKGSVGEPGMEGPMGQRGREGPMGPR. A compositionally biased stretch (gly residues) spans 665–674; sequence GPKGSGGSPG. 2 stretches are compositionally biased toward low complexity: residues 730-748 and 774-796; these read PGAV…AGPD and DPGK…PGRP. Positions 820–838 are enriched in pro residues; that stretch reads PGPPGPPGAMGPPGPPGAP. The segment covering 847 to 857 has biased composition (low complexity); it reads AGESFMGSSSS. Composition is skewed to pro residues over residues 910–922, 977–986, 1023–1035, 1296–1310, and 1348–1357; these read PPGP…PPDL, PPGPPGPPGP, PGPP…PGPP, PGPP…PRGP, and PPGPPGPQGP. Over residues 1377–1393 the composition is skewed to low complexity; sequence SSHSASVSRGSSYSSSM. Asn1493 is a glycosylation site (N-linked (GlcNAc...) asparagine). The segment at 1531-1566 is disordered; the sequence is GHPALEGTREKKETKVTKSMRGGEREASPSSHELPL. The segment covering 1537-1557 has biased composition (basic and acidic residues); the sequence is GTREKKETKVTKSMRGGEREA. The interval 1573 to 1597 is nonhelical region (NC1); sequence SVLAMAYGVHVKISPKGGSWRLTSY.

In terms of assembly, homotrimers of alpha 1(XVII)chains. Interacts (via cytoplasmic region) with ITGB4 (via cytoplasmic region). Interacts (via cytoplasmic region) with DST (via N-terminus). Interacts (via N-terminus) with PLEC. Interacts (via cytoplasmic region) with DSP. In terms of processing, the intracellular/endo domain is disulfide-linked. Prolines at the third position of the tripeptide repeating unit (G-X-Y) are hydroxylated in some or all of the chains. Post-translationally, the ectodomain is shedded from the surface of keratinocytes resulting in a 120-kDa soluble form, also named as 120 kDa linear IgA disease antigen homolog. The shedding is mediated by membrane-bound metalloproteases. Upper lamina lucidalhemidesmosome.

It is found in the cell junction. The protein resides in the hemidesmosome. It localises to the membrane. Its subcellular location is the secreted. The protein localises to the extracellular space. It is found in the extracellular matrix. The protein resides in the basement membrane. Functionally, the 120 kDa linear IgA disease antigen homolog is an anchoring filament component involved in dermal-epidermal cohesion. In Canis lupus familiaris (Dog), this protein is Collagen alpha-1(XVII) chain (COL17A1).